The following is a 207-amino-acid chain: Thaumatin-like protein 1 (207 aa).

8 disulfide bridges follow: C9/C202, C50/C60, C65/C71, C117/C191, C122/C174, C130/C140, C144/C153, and C154/C161.

The protein belongs to the thaumatin family. As to quaternary structure, monomer. Post-translationally, not glycosylated.

It localises to the secreted. Acidic thaumatin-like protein. Exhibits weak beta-1,3-glucanase activity with laminarin as substrate. The chain is Thaumatin-like protein 1 (TLP1) from Manilkara zapota (Sapodilla plum).